The following is a 332-amino-acid chain: Endonuclease 8-like 2 (332 aa).

Residue Pro2 is the Schiff-base intermediate with DNA of the active site. The Proton donor role is filled by Glu3. Catalysis depends on Lys50, which acts as the Proton donor; for beta-elimination activity. The residue at position 50 (Lys50) is an N6-acetyllysine. The tract at residues 56 to 121 (FDPDEEMGPP…EDDSEYLERD (66 aa)) is disordered. Ser68 is modified (phosphoserine). Positions 74–84 (PQKEAQKEGAA) are enriched in basic and acidic residues. The segment covering 94–105 (GQKTPDGSSQSA) has biased composition (polar residues). At Lys154 the chain carries N6-acetyllysine. Asn231 provides a ligand contact to DNA. An FPG-type zinc finger spans residues 284–320 (QVYQREQCPAGHQVMKEAFGPQDGLQRLTWWCPQCQP). The Proton donor; for delta-elimination activity role is filled by Arg310.

The protein belongs to the FPG family. In terms of assembly, binds EP300.

The protein localises to the nucleus. The catalysed reaction is 2'-deoxyribonucleotide-(2'-deoxyribose 5'-phosphate)-2'-deoxyribonucleotide-DNA = a 3'-end 2'-deoxyribonucleotide-(2,3-dehydro-2,3-deoxyribose 5'-phosphate)-DNA + a 5'-end 5'-phospho-2'-deoxyribonucleoside-DNA + H(+). Its activity is regulated as follows. Acetylation of Lys-50 leads to loss of DNA nicking activity. In terms of biological role, involved in base excision repair of DNA damaged by oxidation or by mutagenic agents. Has DNA glycosylase activity towards 5-hydroxyuracil and other oxidized derivatives of cytosine with a preference for mismatched double-stranded DNA (DNA bubbles). Has low or no DNA glycosylase activity towards thymine glycol, 2-hydroxyadenine, hypoxanthine and 8-oxoguanine. Has AP (apurinic/apyrimidinic) lyase activity and introduces nicks in the DNA strand. Cleaves the DNA backbone by beta-delta elimination to generate a single-strand break at the site of the removed base with both 3'- and 5'-phosphates. The chain is Endonuclease 8-like 2 (NEIL2) from Pongo abelii (Sumatran orangutan).